The primary structure comprises 413 residues: Multifunctional CCA protein (413 aa).

Gly8 and Arg11 together coordinate ATP. Residues Gly8 and Arg11 each contribute to the CTP site. The Mg(2+) site is built by Glu21 and Asp23. Positions 91, 137, and 140 each coordinate ATP. CTP contacts are provided by Arg91, Arg137, and Arg140. The HD domain maps to 228–329 (TGEHTLLALA…LKLLEGLDLF (102 aa)).

Belongs to the tRNA nucleotidyltransferase/poly(A) polymerase family. Bacterial CCA-adding enzyme type 1 subfamily. As to quaternary structure, monomer. Can also form homodimers and oligomers. The cofactor is Mg(2+). Ni(2+) is required as a cofactor.

It carries out the reaction a tRNA precursor + 2 CTP + ATP = a tRNA with a 3' CCA end + 3 diphosphate. It catalyses the reaction a tRNA with a 3' CCA end + 2 CTP + ATP = a tRNA with a 3' CCACCA end + 3 diphosphate. Its function is as follows. Catalyzes the addition and repair of the essential 3'-terminal CCA sequence in tRNAs without using a nucleic acid template. Adds these three nucleotides in the order of C, C, and A to the tRNA nucleotide-73, using CTP and ATP as substrates and producing inorganic pyrophosphate. tRNA 3'-terminal CCA addition is required both for tRNA processing and repair. Also involved in tRNA surveillance by mediating tandem CCA addition to generate a CCACCA at the 3' terminus of unstable tRNAs. While stable tRNAs receive only 3'-terminal CCA, unstable tRNAs are marked with CCACCA and rapidly degraded. The polypeptide is Multifunctional CCA protein (Alkalilimnicola ehrlichii (strain ATCC BAA-1101 / DSM 17681 / MLHE-1)).